A 94-amino-acid chain; its full sequence is Large ribosomal subunit protein bL25 (94 aa).

Belongs to the bacterial ribosomal protein bL25 family. As to quaternary structure, part of the 50S ribosomal subunit; part of the 5S rRNA/L5/L18/L25 subcomplex. Contacts the 5S rRNA. Binds to the 5S rRNA independently of L5 and L18.

This is one of the proteins that binds to the 5S RNA in the ribosome where it forms part of the central protuberance. The sequence is that of Large ribosomal subunit protein bL25 from Escherichia coli O157:H7.